The chain runs to 120 residues: Putative pterin-4-alpha-carbinolamine dehydratase (120 aa).

It belongs to the pterin-4-alpha-carbinolamine dehydratase family.

It carries out the reaction (4aS,6R)-4a-hydroxy-L-erythro-5,6,7,8-tetrahydrobiopterin = (6R)-L-erythro-6,7-dihydrobiopterin + H2O. This Bdellovibrio bacteriovorus (strain ATCC 15356 / DSM 50701 / NCIMB 9529 / HD100) protein is Putative pterin-4-alpha-carbinolamine dehydratase.